The chain runs to 98 residues: MPSISINITLAFTMALTGMLVFRSHLMSSLLCLEGMMLSMFILSILFIMNMHFTVSFIMPILLLVLAACEAAIGLALLVMVSNTYGLDYVQNLNLLQC.

3 helical membrane passes run 2-22 (PSISINITLAFTMALTGMLVF), 29-49 (SLLCLEGMMLSMFILSILFIM), and 61-81 (ILLLVLAACEAAIGLALLVMV).

It belongs to the complex I subunit 4L family. Core subunit of respiratory chain NADH dehydrogenase (Complex I) which is composed of 45 different subunits.

It is found in the mitochondrion inner membrane. The enzyme catalyses a ubiquinone + NADH + 5 H(+)(in) = a ubiquinol + NAD(+) + 4 H(+)(out). Core subunit of the mitochondrial membrane respiratory chain NADH dehydrogenase (Complex I) which catalyzes electron transfer from NADH through the respiratory chain, using ubiquinone as an electron acceptor. Part of the enzyme membrane arm which is embedded in the lipid bilayer and involved in proton translocation. The protein is NADH-ubiquinone oxidoreductase chain 4L (MT-ND4L) of Lepilemur mitsinjoensis (Mitsinjo sportive lemur).